Consider the following 1040-residue polypeptide: Multidrug resistance protein MdtB (1040 aa).

Helical transmembrane passes span 16-36 (FIMR…AGII), 347-367 (LMMA…NIPA), 369-389 (IIPG…MVFL), 396-416 (LTLM…IVVI), 440-460 (IGFT…PLLF), 472-492 (FAIT…TLTP), 537-557 (WLTL…WVFI), 863-883 (LGST…VLGI), 888-908 (FIHP…ALLA), 911-931 (IAGS…IGIV), 968-988 (ILMT…STGV), and 998-1018 (IGMV…TPVI).

This sequence belongs to the resistance-nodulation-cell division (RND) (TC 2.A.6) family. MdtB subfamily. As to quaternary structure, part of a tripartite efflux system composed of MdtA, MdtB and MdtC. MdtB forms a heteromultimer with MdtC.

The protein resides in the cell inner membrane. The sequence is that of Multidrug resistance protein MdtB from Shigella boydii serotype 18 (strain CDC 3083-94 / BS512).